Consider the following 334-residue polypeptide: DNA-directed RNA polymerase subunit alpha (334 aa).

An alpha N-terminal domain (alpha-NTD) region spans residues 1–234 (MQRSLNEFLT…QQLAVFVDFD (234 aa)). The tract at residues 248–334 (IDPILLRPVD…IRGDDRVLGG (87 aa)) is alpha C-terminal domain (alpha-CTD).

Belongs to the RNA polymerase alpha chain family. As to quaternary structure, homodimer. The RNAP catalytic core consists of 2 alpha, 1 beta, 1 beta' and 1 omega subunit. When a sigma factor is associated with the core the holoenzyme is formed, which can initiate transcription.

It carries out the reaction RNA(n) + a ribonucleoside 5'-triphosphate = RNA(n+1) + diphosphate. Functionally, DNA-dependent RNA polymerase catalyzes the transcription of DNA into RNA using the four ribonucleoside triphosphates as substrates. This Hahella chejuensis (strain KCTC 2396) protein is DNA-directed RNA polymerase subunit alpha.